Here is a 465-residue protein sequence, read N- to C-terminus: DEAD-box ATP-dependent RNA helicase 55 (465 aa).

Residues 17-45 (FSELKPPLSEDIIEALDRSGFEVCTPVQA) carry the Q motif motif. Residues 48–219 (IPFLCSHKDV…KAGLRNPYLK (172 aa)) enclose the Helicase ATP-binding domain. 61–68 (AATGSGKT) contacts ATP. Positions 167–170 (DEAD) match the DEAD box motif. The Helicase C-terminal domain maps to 228 to 422 (QLVHLLIENK…KDKLQQEKRG (195 aa)). Residues 413 to 465 (KDKLQQEKRGKRKKSSKEAVDDSNKASRKRKLTGRQRQTIQTAQDEEEMNLRL) form a disordered region. Over residues 428–437 (SKEAVDDSNK) the composition is skewed to basic and acidic residues. Acidic residues predominate over residues 456-465 (QDEEEMNLRL).

This sequence belongs to the DEAD box helicase family. DDX55/SPB4 subfamily.

It catalyses the reaction ATP + H2O = ADP + phosphate + H(+). In Arabidopsis thaliana (Mouse-ear cress), this protein is DEAD-box ATP-dependent RNA helicase 55 (RH55).